The sequence spans 339 residues: NADH-quinone oxidoreductase subunit H (339 aa).

Transmembrane regions (helical) follow at residues 9–29 (IFPL…LILC), 50–70 (PNVV…KLLF), 82–102 (ILFV…WAVI), 115–135 (VGVL…IIAG), 161–181 (MGLV…SQIV), 187–207 (MPWW…ISVL), 235–255 (MGFA…SAMT), 275–295 (IPGF…FLWI), and 311–331 (GWKV…SVLI).

The protein belongs to the complex I subunit 1 family. In terms of assembly, NDH-1 is composed of 14 different subunits. Subunits NuoA, H, J, K, L, M, N constitute the membrane sector of the complex.

Its subcellular location is the cell inner membrane. The catalysed reaction is a quinone + NADH + 5 H(+)(in) = a quinol + NAD(+) + 4 H(+)(out). In terms of biological role, NDH-1 shuttles electrons from NADH, via FMN and iron-sulfur (Fe-S) centers, to quinones in the respiratory chain. The immediate electron acceptor for the enzyme in this species is believed to be ubiquinone. Couples the redox reaction to proton translocation (for every two electrons transferred, four hydrogen ions are translocated across the cytoplasmic membrane), and thus conserves the redox energy in a proton gradient. This subunit may bind ubiquinone. In Rickettsia bellii (strain RML369-C), this protein is NADH-quinone oxidoreductase subunit H.